The primary structure comprises 1488 residues: DNA polymerase alpha catalytic subunit (1488 aa).

Disordered stretches follow at residues 1 to 22 (MSES…GRFA), 79 to 124 (LRDF…TGKA), and 236 to 325 (FFSS…ESED). Acidic residues predominate over residues 83–93 (FEDEDEYSDGE). Positions 96–103 (RKDSKKKK) match the Nuclear localization signal motif. Residues 99 to 113 (SKKKKGVAPNSKKRP) are compositionally biased toward basic residues. Ser-239 carries the post-translational modification Phosphoserine. The segment covering 242 to 258 (IKKEPMPEKTPAKKATE) has biased composition (basic and acidic residues). A compositionally biased stretch (acidic residues) spans 260-278 (PFSDNEMDFSCLDDDENQF). Ser-262 and Ser-269 each carry phosphoserine. Over residues 286-303 (TEKVSQTKTAAEKTSQSK) the composition is skewed to polar residues. Over residues 304–325 (VAEKSAPKKETTGSPKESESED) the composition is skewed to basic and acidic residues. At Thr-314 the chain carries Phosphothreonine. Residue Ser-317 is modified to Phosphoserine. The interval 638–758 (DSERALLSWF…DLLEMYEKGE (121 aa)) is contains conserved residues essential for 3' -&gt; 5' exonuclease activities. DNA-binding stretches follow at residues 675–734 (QIVA…CKQV) and 1255–1380 (PTKF…RKKS). Cys-1296, Cys-1299, Cys-1324, Cys-1329, Cys-1362, Cys-1367, Cys-1385, and Cys-1388 together coordinate Zn(2+). A CysA-type zinc finger spans residues 1296 to 1327 (CVTCKTEQLMASAYRPGPSNSHIAVLQQCAKS). The CysB motif signature appears at 1362–1388 (CDHPDCNFNTRTHSLRKKSHRPLCQKC).

The protein belongs to the DNA polymerase type-B family. As to quaternary structure, component of the alpha DNA polymerase complex (also known as the alpha DNA polymerase-primase complex) consisting of four subunits: the catalytic subunit PolA1, the regulatory subunit PolA2, and the primase complex subunits Prim1 and Prim2 respectively. PolA1 associates with the DNA primase complex before association with PolA2. Interacts with Dpit47; the interaction inhibits the activity of the DNA polymerase and occurs only in proliferating cells but not in quiescent cells. In terms of processing, in embryos, a cleaved form of 130 kDa is produced up to cycle 14 and then disappears. As to expression, expressed in embryos (at protein level).

The protein resides in the nucleus. It catalyses the reaction DNA(n) + a 2'-deoxyribonucleoside 5'-triphosphate = DNA(n+1) + diphosphate. Inhibited by N2-(p-n-butylphenyl) deoxyguanosine 5'-triphosphate and N2-(p-n-butylphenyl) deoxyadenosine 5'-triphosphate. DNA synthesis is not inhibited by fungal toxin alpha-amaitin. The 3'-5' exonuclease activity is inhibited by 10mM dGMP. Its function is as follows. Catalytic subunit of the DNA polymerase alpha complex (also known as the alpha DNA polymerase-primase complex) which plays an essential role in the initiation of DNA synthesis. During the S phase of the cell cycle, the DNA polymerase alpha complex (composed of a catalytic subunit PolA1, an accessory subunit PolA2 and two primase subunits, the catalytic subunit Prim1 and the regulatory subunit Prim2) is recruited to DNA at the replicative forks. The primase subunit of the polymerase alpha complex initiates DNA synthesis by oligomerising short RNA primers on both leading and lagging strands. These primers are initially extended by the polymerase alpha catalytic subunit and subsequently transferred to polymerase delta and polymerase epsilon for processive synthesis on the lagging and leading strand, respectively. In addition to polymerase activity, exhibits 3' to 5' exonuclease activity. In Drosophila melanogaster (Fruit fly), this protein is DNA polymerase alpha catalytic subunit.